A 3259-amino-acid chain; its full sequence is Striated muscle-specific serine/threonine-protein kinase (3259 aa).

The interval 1 to 30 is disordered; sequence MQKARGTRGEDAGTRAPPSPGVPPKRAKVG. R33 is subject to Omega-N-methylarginine. Residues 45–126 form the Ig-like 1 domain; the sequence is PVFLRPLKNA…GKASCEAVLT (82 aa). Phosphoserine is present on S141. Disordered stretches follow at residues 155–185, 198–226, 278–716, and 816–880; these read RAFS…TSEE, EQEA…GPRH, PSGL…DDSY, and VRPG…KVSL. Polar residues predominate over residues 158-185; sequence STPTGGSDTLVGTSLDTPPTSVTGTSEE. Residues 301 to 317 show a composition bias toward pro residues; it reads PALPPPSKSALLPPPSP. Residues S368 and S375 each carry the phosphoserine modification. T379 is modified (phosphothreonine). Phosphoserine is present on residues S382 and S385. The segment covering 404–422 has biased composition (basic and acidic residues); it reads ILDKLQFFEERRRSLERSD. The residue at position 423 (S423) is a Phosphoserine. At T453 the chain carries Phosphothreonine. Residues S457, S463, S493, S511, S531, and S554 each carry the phosphoserine modification. The span at 459–473 shows a compositional bias: basic and acidic residues; that stretch reads EELRSPRGSVAERRR. Basic and acidic residues predominate over residues 510–522; it reads TSREELVRSHESL. Basic and acidic residues-rich tracts occupy residues 624 to 638 and 663 to 680; these read PESR…KREP and EKNR…RGPE. An Ig-like 2 domain is found at 727-817; the sequence is PVFEIPLQNM…ASCASSLAVR (91 aa). A compositionally biased stretch (polar residues) spans 820–830; that stretch reads ASTSPFSSPIT. Ig-like domains lie at 874–963, 968–1056, and 1069–1157; these read PTFK…ARLE, PESR…DELT, and PLFT…AQLY. C994 and C1046 are disulfide-bonded. S1133 and S1177 each carry phosphoserine. The segment at 1162–1185 is disordered; it reads RTAASGPSSKLEKMPSIPEEPEHG. In terms of domain architecture, Ig-like 6 spans 1193–1283; that stretch reads PDFLRPLQDL…AACYAHLYVT (91 aa). The region spanning 1290 to 1387 is the Fibronectin type-III 1 domain; that stretch reads PDGAPQVVAV…PSEPVQLLEH (98 aa). Low complexity predominate over residues 1367 to 1379; sequence SSGKSSSKPSAPS. Residues 1367 to 1386 are disordered; that stretch reads SSGKSSSKPSAPSEPVQLLE. The region spanning 1490–1578 is the Ig-like 7 domain; sequence PRFESIMEDV…GEVSCKAELS (89 aa). A Protein kinase 1 domain is found at 1606–1859; it reads YDIHQEIGRG…AEETLEHPWF (254 aa). ATP-binding positions include 1612–1620 and K1635; that span reads IGRGAFSYL. The active-site Proton acceptor is the D1724. 3 disordered regions span residues 1913-2244, 2336-2451, and 2463-2562; these read MPRR…QMPA, AKFK…SPVL, and RLSS…SQPN. A compositionally biased stretch (low complexity) spans 1918 to 1927; sequence PPSGGLSSSS. A phosphoserine mark is found at S1993, S2004, S2019, S2020, and S2042. Basic and acidic residues predominate over residues 2009-2019; the sequence is SPRRPELRRGS. At R2060 the chain carries Asymmetric dimethylarginine; alternate. R2060 bears the Omega-N-methylarginine; alternate mark. Positions 2069–2081 are enriched in low complexity; the sequence is AQRLQALRQRLLR. Residues S2114 and S2135 each carry the phosphoserine modification. Residue R2144 is modified to Omega-N-methylarginine. Positions 2168-2179 are enriched in polar residues; it reads ESPSLSALSETQ. A compositionally biased stretch (pro residues) spans 2180-2189; that stretch reads PPSPALPSAP. S2182 and S2207 each carry phosphoserine. Residues 2193 to 2207 are compositionally biased toward polar residues; the sequence is ITKSPEPSAATSRDS. The span at 2208–2218 shows a compositional bias: pro residues; the sequence is PQPPAPQPVPE. A compositionally biased stretch (basic and acidic residues) spans 2219–2229; sequence KIPEPKPEPVR. Residues 2230-2244 are compositionally biased toward low complexity; that stretch reads AAKPAQPPLALQMPA. Over residues 2336–2345 the composition is skewed to basic and acidic residues; it reads AKFKRSRESP. Low complexity predominate over residues 2346–2355; that stretch reads LSRGLRLLSR. The segment covering 2356 to 2372 has biased composition (basic and acidic residues); that stretch reads SRSEERGPFRGAEDDGI. Position 2376 is a phosphoserine (S2376). T2380 is subject to Phosphothreonine. A compositionally biased stretch (basic and acidic residues) spans 2384 to 2395; that stretch reads LVRRPERSRSVQ. Residues S2410, S2414, S2438, S2439, S2444, and S2448 each carry the phosphoserine modification. A compositionally biased stretch (low complexity) spans 2463 to 2484; that stretch reads RLSSRLQRSGSSEDSGGASGRS. Positions 2510 to 2520 are enriched in polar residues; that stretch reads QLASQTGATTP. A phosphoserine mark is found at S2521 and S2524. Positions 2521 to 2540 are enriched in low complexity; that stretch reads SAESLGSEASGTSGSSAPGE. Positions 2543 to 2554 are enriched in basic residues; sequence SRHRWGLSRLRK. The residue at position 2559 (S2559) is a Phosphoserine. One can recognise an Ig-like 8 domain in the interval 2583 to 2673; the sequence is PPVFHIKLKD…GSITSSCTVA (91 aa). A disulfide bond links C2605 and C2657. Positions 2680 to 2774 constitute a Fibronectin type-III 2 domain; that stretch reads KLAPPEVPQT…KVFIRGTQDS (95 aa). T2771 is subject to Phosphothreonine. Disordered regions lie at residues 2771–2829 and 2855–2957; these read TQDS…MSAN and TQQA…PQKP. S2774 is subject to Phosphoserine. Pro residues predominate over residues 2793-2810; the sequence is RAPPPDSPTSLVPTPPLA. Over residues 2814–2828 the composition is skewed to low complexity; it reads SQASTLSPSTSSMSA. The Fibronectin type-III 3 domain maps to 2859 to 2965; that stretch reads EPSPPSILVT…KPYTFLEEKA (107 aa). Polar residues predominate over residues 2880–2907; it reads GTLTPTSSPQGVKPAPSSSSLYMVTSFV. A compositionally biased stretch (pro residues) spans 2910–2924; that stretch reads PPDPQPPAPEPPPEP. The span at 2940–2950 shows a compositional bias: polar residues; the sequence is SSPTPESTTLR. S2941 carries the phosphoserine modification. Residues 2958-3210 enclose the Protein kinase 2 domain; it reads YTFLEEKARG…LQDCLAHPWL (253 aa). Residues 2964-2972 and K2987 each bind ATP; that span reads KARGRFGVV. D3077 (proton acceptor) is an active-site residue.

This sequence belongs to the protein kinase superfamily. CAMK Ser/Thr protein kinase family. As to quaternary structure, interacts with MTM1. May be autophosphorylated. As to expression, isoform 2 is highly expressed in differentiated arterial smooth muscle cells (ASMC) in the medial layer of the aorta. Weakly detected in brain and testis and to a lesser extent in organs rich in striated muscle or visceral smooth muscle.

The protein localises to the nucleus. It catalyses the reaction L-seryl-[protein] + ATP = O-phospho-L-seryl-[protein] + ADP + H(+). It carries out the reaction L-threonyl-[protein] + ATP = O-phospho-L-threonyl-[protein] + ADP + H(+). In terms of biological role, isoform 2 may have a role in regulating the growth and differentiation of arterial smooth muscle cells. In Rattus norvegicus (Rat), this protein is Striated muscle-specific serine/threonine-protein kinase (Speg).